Reading from the N-terminus, the 91-residue chain is Signal peptidase complex subunit 1 (91 aa).

Over 1–28 the chain is Cytoplasmic; it reads MEIFNDLSRKLVFPIDYPSQRRVAKLTD. A helical transmembrane segment spans residues 29 to 48; that stretch reads IILGSGTLVSCLLGFYAGSL. The Lumenal segment spans residues 49-51; it reads SLT. Residues 52-71 form a helical membrane-spanning segment; it reads LYAFAAAYGLALLLVVPAYG. Topologically, residues 72 to 91 are cytoplasmic; sequence KYRQQKLAWVGSAAATTKDL.

Belongs to the SPCS1 family. As to quaternary structure, component of the signal peptidase complex (SPC) composed of a catalytic subunit SEC11 and three accessory subunits SPC1, SPC2 and SPC3. The complex induces a local thinning of the ER membrane which is used to measure the length of the signal peptide (SP) h-region of protein substrates. This ensures the selectivity of the complex towards h-regions shorter than 18-20 amino acids. SPC associates with the translocon complex.

The protein localises to the endoplasmic reticulum membrane. Functionally, component of the signal peptidase complex (SPC) which catalyzes the cleavage of N-terminal signal sequences from nascent proteins as they are translocated into the lumen of the endoplasmic reticulum. Dispensable for SPC enzymatic activity. This Eremothecium gossypii (strain ATCC 10895 / CBS 109.51 / FGSC 9923 / NRRL Y-1056) (Yeast) protein is Signal peptidase complex subunit 1 (SPC1).